Here is a 355-residue protein sequence, read N- to C-terminus: Protein RecA (355 aa).

67–74 (GPESSGKT) is an ATP binding site.

It belongs to the RecA family.

The protein resides in the cytoplasm. Functionally, can catalyze the hydrolysis of ATP in the presence of single-stranded DNA, the ATP-dependent uptake of single-stranded DNA by duplex DNA, and the ATP-dependent hybridization of homologous single-stranded DNAs. It interacts with LexA causing its activation and leading to its autocatalytic cleavage. This is Protein RecA from Shewanella piezotolerans (strain WP3 / JCM 13877).